Reading from the N-terminus, the 530-residue chain is Seeligeriolysin (530 aa).

An N-terminal signal peptide occupies residues 1-25; that stretch reads MKIFGLVIMSLLFVSLPITQQPEAR. The interval 36–55 is disordered; sequence TISPAETPESPPATPKTPVE. Transmembrane regions (beta stranded) follow at residues 215 to 228, 235 to 244, 313 to 322, and 330 to 342; these read ESQL…AFKA, VNFEAISDGK, SNKVKTAFEA, and KGDV…IKNS. The Conserved undecapeptide signature appears at 484–494; the sequence is ECTGLFWEWWR. Positions 516 to 517 match the Cholesterol binding motif; the sequence is TL.

Belongs to the cholesterol-dependent cytolysin family. As to quaternary structure, homooligomeric pore complex of 35 to 50 subunits; when inserted in the host membrane.

It localises to the secreted. It is found in the host cell membrane. A cholesterol-dependent toxin that causes cytolysis by forming pores in cholesterol containing host membranes. L.seeligeri is non-pathogenic, perhaps in part because this protein is about 25% as toxic as listeriolysin O. Mutating a single residue in the undecapeptide increases toxicity 2-fold. After binding to target membranes, the protein undergoes a major conformation change, leading to its insertion in the host membrane and formation of an oligomeric pore complex. Cholesterol is required for binding to host membranes, membrane insertion and pore formation; cholesterol binding is mediated by a Thr-Leu pair in the C-terminus. Can be reversibly inactivated by oxidation. The chain is Seeligeriolysin from Listeria seeligeri.